The chain runs to 371 residues: MPHQQMLILFGLLPVATNISTWWNFGSMLLACSSMQVLTGFFLAVHYTANINLAFSSIVHITRDVPYGWMMQNLHAIGASMFFICIYIHIARGLYYGSYLNKKTWLSGTTLLIMLMATAFFGYVLPWGQMSFWAATVITNLLTAIPYLGTTMTTWLWGGFAINDPTLTRFFALHFILPFGIISLSSLHIMLLHEDGSSNPLGTNSDIDKIPFHPYHTYKDLLMLSLMVLMLLMTVSFLPDIFNDPENFSKANPLVTPQHIKPEWYFLFAYGILRSIPNKLWGALALAMSITILLTVPFTHTSTIRSMMFRPIMQLMFWTLVATFMVITWAATKPVEPPFTMISQIASTIYFLFLIMNPIAGWIENNILKYN.

The next 4 helical transmembrane spans lie at F25–V45, W69–I90, W105–L125, and F170–M190. 2 residues coordinate heme b: H75 and H89. The heme b site is built by H174 and H188. An a ubiquinone-binding site is contributed by H193. Helical transmembrane passes span Y218–L238, L280–H300, I312–T332, and F339–P358.

Belongs to the cytochrome b family. In terms of assembly, the cytochrome bc1 complex contains 3 respiratory subunits (MT-CYB, CYC1 and UQCRFS1), 2 core proteins (UQCRC1 and UQCRC2) and probably 6 low-molecular weight proteins. Heme b is required as a cofactor.

The protein localises to the mitochondrion inner membrane. In terms of biological role, component of the ubiquinol-cytochrome c reductase complex (complex III or cytochrome b-c1 complex) that is part of the mitochondrial respiratory chain. The b-c1 complex mediates electron transfer from ubiquinol to cytochrome c. Contributes to the generation of a proton gradient across the mitochondrial membrane that is then used for ATP synthesis. The polypeptide is Cytochrome b (MT-CYB) (Eryx miliaris nogaiorum (Black sand boa)).